The chain runs to 360 residues: 3-dehydroquinate synthase (360 aa).

NAD(+) is bound by residues 69–74, 103–107, 127–128, K140, K149, and 167–170; these read DGEAYK, GVIGD, TT, and CLQT. 3 residues coordinate Zn(2+): E182, H245, and H262.

The protein belongs to the sugar phosphate cyclases superfamily. Dehydroquinate synthase family. It depends on Co(2+) as a cofactor. Requires Zn(2+) as cofactor. The cofactor is NAD(+).

Its subcellular location is the cytoplasm. It catalyses the reaction 7-phospho-2-dehydro-3-deoxy-D-arabino-heptonate = 3-dehydroquinate + phosphate. Its pathway is metabolic intermediate biosynthesis; chorismate biosynthesis; chorismate from D-erythrose 4-phosphate and phosphoenolpyruvate: step 2/7. In terms of biological role, catalyzes the conversion of 3-deoxy-D-arabino-heptulosonate 7-phosphate (DAHP) to dehydroquinate (DHQ). This Aeromonas hydrophila subsp. hydrophila (strain ATCC 7966 / DSM 30187 / BCRC 13018 / CCUG 14551 / JCM 1027 / KCTC 2358 / NCIMB 9240 / NCTC 8049) protein is 3-dehydroquinate synthase.